A 262-amino-acid polypeptide reads, in one-letter code: Bacteriorhodopsin (262 aa).

The propeptide occupies 1 to 13; the sequence is MLELLPTAVEGVS. Position 14 is a pyrrolidone carboxylic acid (Gln14). The Extracellular portion of the chain corresponds to 14-22; sequence QAQITGRPE. The helical transmembrane segment at 23–42 threads the bilayer; it reads WIWLALGTALMGLGTLYFLV. Residues 43–56 lie on the Cytoplasmic side of the membrane; sequence KGMGVSDPDAKKFY. A helical transmembrane segment spans residues 57-75; it reads AITTLVPAIAFTMYLSMLL. The Extracellular portion of the chain corresponds to 76–92; sequence GYGLTMVPFGGEQNPIY. A helical transmembrane segment spans residues 93–109; sequence WARYADWLFTTPLLLLD. Topologically, residues 110 to 120 are cytoplasmic; sequence LALLVDADQGT. Residues 121–140 traverse the membrane as a helical segment; the sequence is ILALVGADGIMIGTGLVGAL. Residues 141–147 lie on the Extracellular side of the membrane; the sequence is TKVYSYR. Residues 148-167 traverse the membrane as a helical segment; that stretch reads FVWWAISTAAMLYILYVLFF. Residues 168–185 are Cytoplasmic-facing; it reads GFTSKAESMRPEVASTFK. A helical membrane pass occupies residues 186 to 204; that stretch reads VLRNVTVVLWSAYPVVWLI. Residues 205 to 216 are Extracellular-facing; sequence GSEGAGIVPLNI. A helical membrane pass occupies residues 217 to 236; that stretch reads ETLLFMVLDVSAKVGFGLIL. Residue Lys229 is modified to N6-(retinylidene)lysine. The Cytoplasmic segment spans residues 237-262; the sequence is LRSRAIFGEAEAPEPSAGDGAAATSD.

In terms of assembly, homotrimer. The covalent binding of retinal to the apoprotein, bacterioopsin, generates bacteriorhodopsin.

Its subcellular location is the cell membrane. In terms of biological role, light-driven proton pump. The sequence is that of Bacteriorhodopsin (bop) from Halobacterium salinarum (strain ATCC 700922 / JCM 11081 / NRC-1) (Halobacterium halobium).